Here is a 126-residue protein sequence, read N- to C-terminus: Aspartate 1-decarboxylase (126 aa).

The active-site Schiff-base intermediate with substrate; via pyruvic acid is the S25. S25 is modified (pyruvic acid (Ser)). T57 lines the substrate pocket. Y58 serves as the catalytic Proton donor. Residue 73-75 participates in substrate binding; the sequence is GSA.

Belongs to the PanD family. As to quaternary structure, heterooctamer of four alpha and four beta subunits. Pyruvate is required as a cofactor. Post-translationally, is synthesized initially as an inactive proenzyme, which is activated by self-cleavage at a specific serine bond to produce a beta-subunit with a hydroxyl group at its C-terminus and an alpha-subunit with a pyruvoyl group at its N-terminus.

The protein resides in the cytoplasm. The catalysed reaction is L-aspartate + H(+) = beta-alanine + CO2. The protein operates within cofactor biosynthesis; (R)-pantothenate biosynthesis; beta-alanine from L-aspartate: step 1/1. Catalyzes the pyruvoyl-dependent decarboxylation of aspartate to produce beta-alanine. The protein is Aspartate 1-decarboxylase of Acidovorax ebreus (strain TPSY) (Diaphorobacter sp. (strain TPSY)).